Reading from the N-terminus, the 270-residue chain is DNA repair protein RecO (270 aa).

Belongs to the RecO family.

Involved in DNA repair and RecF pathway recombination. The chain is DNA repair protein RecO from Synechococcus sp. (strain WH7803).